Consider the following 103-residue polypeptide: Large ribosomal subunit protein bL21 (103 aa).

It belongs to the bacterial ribosomal protein bL21 family. As to quaternary structure, part of the 50S ribosomal subunit. Contacts protein L20.

Its function is as follows. This protein binds to 23S rRNA in the presence of protein L20. This is Large ribosomal subunit protein bL21 from Maridesulfovibrio salexigens (strain ATCC 14822 / DSM 2638 / NCIMB 8403 / VKM B-1763) (Desulfovibrio salexigens).